Reading from the N-terminus, the 117-residue chain is Large ribosomal subunit protein bL19 (117 aa).

The protein belongs to the bacterial ribosomal protein bL19 family.

Functionally, this protein is located at the 30S-50S ribosomal subunit interface and may play a role in the structure and function of the aminoacyl-tRNA binding site. This is Large ribosomal subunit protein bL19 from Exiguobacterium sibiricum (strain DSM 17290 / CCUG 55495 / CIP 109462 / JCM 13490 / 255-15).